The primary structure comprises 194 residues: Flagellar transcriptional regulator FlhC (194 aa).

Residues Cys139, Cys142, Cys159, and Cys162 each contribute to the Zn(2+) site.

This sequence belongs to the FlhC family. As to quaternary structure, heterohexamer composed of two FlhC and four FlhD subunits. Each FlhC binds a FlhD dimer, forming a heterotrimer, and a hexamer assembles by dimerization of two heterotrimers. Zn(2+) serves as cofactor.

The protein localises to the cytoplasm. Its function is as follows. Functions in complex with FlhD as a master transcriptional regulator that regulates transcription of several flagellar and non-flagellar operons by binding to their promoter region. Activates expression of class 2 flagellar genes, including fliA, which is a flagellum-specific sigma factor that turns on the class 3 genes. Also regulates genes whose products function in a variety of physiological pathways. The chain is Flagellar transcriptional regulator FlhC from Serratia marcescens.